An 812-amino-acid polypeptide reads, in one-letter code: MKEFPKNYNFIESEKKWQKIWQEKQIYAYDENIAKDETFVVDTPPPTVSGQLHIGHVYSYTQTDFIVRFQRMMGKNIFYPMGFDDNGLPTERLVEKQRQVKAYNMGREELINICNEVVASEEEKFRSLFNQIALSVDWNLEYQTISPLSRKISQMSFLDLVKKGEVYRNNQPILWDPVDGTALAQADIEDKEKTSFMNYITFKTEANDEFTIATTRPELLPACVAVFYHPDDKRYQHLAGKFAVTPLFNVKVPLLADPLVQQDKGTGLVMCCTFGDQTDITWWKTHNLPLNTIITKKGTIDFPHEIGIDGLKIKEARAKIIDILKEQELFVKQEEITQTVKCAERSGAPLEVLTVPQWFVKTISHKDELLKRANELNWHPKNMKIRLDNWINAISWDWCISRQRYFGVPFPVWYSKRIGEEGKILYADISQLPVDPLKDLPIGYSKYEVEPDLDVMDTWATSSVSPQLSTWGISDEFAVNKDRHGKLFPMDLRPQAHEIIRTWAFYTILKAHLHQNTLPWKNIMVSGWCLAEDRSKMSKSKGNVLVPEKLLEQYGSDVIRYWSANSKLGADTAYSEDVMKNGKRLVNKLWNAAKFVSQHFDKLSDEDKKTNLIDVKEKITHEFDQWIINKLVELVNNATNELQNYEYANAMHLTEKFFWSVFCDNYLEISKTRAYDEENKNPSGQYSSVLTLYHVMQTLLKLFAPFMPHITEELYQILYSENSIHIKGNWINYGNLNYKIDAKQPERLLEILDHVRKFKAEKNLSIKAEVQLLEVSGIELSKELTSDLKNVTSAKEVKFKPTNDEIKVSILT.

The 'HIGH' region signature appears at 46–56 (PTVSGQLHIGH). A 'KMSKS' region motif is present at residues 536–540 (KMSKS). ATP is bound at residue K539.

It belongs to the class-I aminoacyl-tRNA synthetase family. ValS type 2 subfamily. Monomer.

The protein resides in the cytoplasm. The enzyme catalyses tRNA(Val) + L-valine + ATP = L-valyl-tRNA(Val) + AMP + diphosphate. Catalyzes the attachment of valine to tRNA(Val). As ValRS can inadvertently accommodate and process structurally similar amino acids such as threonine, to avoid such errors, it has a 'posttransfer' editing activity that hydrolyzes mischarged Thr-tRNA(Val) in a tRNA-dependent manner. In Rickettsia bellii (strain OSU 85-389), this protein is Valine--tRNA ligase.